Reading from the N-terminus, the 405-residue chain is Diaminopimelate decarboxylase (405 aa).

N6-(pyridoxal phosphate)lysine is present on lysine 46. Pyridoxal 5'-phosphate contacts are provided by residues glycine 225 and 259 to 262; that span reads EPGR. The substrate site is built by arginine 262, arginine 298, and tyrosine 302. Cysteine 329 (proton donor) is an active-site residue. 2 residues coordinate substrate: glutamate 330 and tyrosine 358. A pyridoxal 5'-phosphate-binding site is contributed by tyrosine 358.

This sequence belongs to the Orn/Lys/Arg decarboxylase class-II family. LysA subfamily. As to quaternary structure, homodimer. The cofactor is pyridoxal 5'-phosphate.

It catalyses the reaction meso-2,6-diaminopimelate + H(+) = L-lysine + CO2. It participates in amino-acid biosynthesis; L-lysine biosynthesis via DAP pathway; L-lysine from DL-2,6-diaminopimelate: step 1/1. Functionally, specifically catalyzes the decarboxylation of meso-diaminopimelate (meso-DAP) to L-lysine. The chain is Diaminopimelate decarboxylase from Helicobacter pylori (strain ATCC 700392 / 26695) (Campylobacter pylori).